A 287-amino-acid chain; its full sequence is 4,4'-diapophytoene synthase (287 aa).

(2E,6E)-farnesyl diphosphate is bound by residues 18 to 21 (HSKS), Tyr-41, and Arg-45. Residues Asp-48 and Asp-52 each contribute to the Mg(2+) site. Residue Gln-165 participates in (2E,6E)-farnesyl diphosphate binding. Residue Asn-168 participates in Mg(2+) binding. Residue Arg-171 coordinates (2E,6E)-farnesyl diphosphate. Asp-172 is a binding site for Mg(2+). Tyr-248 provides a ligand contact to (2E,6E)-farnesyl diphosphate.

The protein belongs to the phytoene/squalene synthase family. CrtM subfamily. Mg(2+) serves as cofactor.

The catalysed reaction is 2 (2E,6E)-farnesyl diphosphate = 15-cis-4,4'-diapophytoene + 2 diphosphate. Its pathway is carotenoid biosynthesis; staphyloxanthin biosynthesis; staphyloxanthin from farnesyl diphosphate: step 1/5. Its function is as follows. Involved in the biosynthesis of the yellow-orange carotenoid staphyloxanthin, which plays a role in the virulence via its protective function against oxidative stress. Catalyzes the head-to-head condensation of two molecules of farnesyl diphosphate (FPP) into the colorless C(30) carotenoid 4,4'-diapophytoene (dehydrosqualene). The chain is 4,4'-diapophytoene synthase (crtM) from Staphylococcus aureus (strain bovine RF122 / ET3-1).